Reading from the N-terminus, the 389-residue chain is Lipid-A-disaccharide synthase (389 aa).

This sequence belongs to the LpxB family.

It catalyses the reaction a lipid X + a UDP-2-N,3-O-bis[(3R)-3-hydroxyacyl]-alpha-D-glucosamine = a lipid A disaccharide + UDP + H(+). It participates in bacterial outer membrane biogenesis; LPS lipid A biosynthesis. Functionally, condensation of UDP-2,3-diacylglucosamine and 2,3-diacylglucosamine-1-phosphate to form lipid A disaccharide, a precursor of lipid A, a phosphorylated glycolipid that anchors the lipopolysaccharide to the outer membrane of the cell. The protein is Lipid-A-disaccharide synthase of Burkholderia vietnamiensis (strain G4 / LMG 22486) (Burkholderia cepacia (strain R1808)).